The chain runs to 319 residues: tRNA uridine(34) hydroxylase (319 aa).

The region spanning 127-221 (KQEDTVIIDA…YGKDPEVQGE (95 aa)) is the Rhodanese domain. C181 functions as the Cysteine persulfide intermediate in the catalytic mechanism.

Belongs to the TrhO family.

It catalyses the reaction uridine(34) in tRNA + AH2 + O2 = 5-hydroxyuridine(34) in tRNA + A + H2O. Catalyzes oxygen-dependent 5-hydroxyuridine (ho5U) modification at position 34 in tRNAs. The polypeptide is tRNA uridine(34) hydroxylase (Bacillus anthracis (strain A0248)).